A 64-amino-acid polypeptide reads, in one-letter code: Putative calcium channel toxin Tx758 (64 aa).

Positions 1-18 (MSTFVIVFLLLTAVLCHA) are cleaved as a signal peptide. The propeptide occupies 19 to 27 (EPALDETAR). 3 disulfide bridges follow: Cys29–Cys43, Cys36–Cys49, and Cys42–Cys58.

The protein belongs to the scorpion calcin-like family. In terms of tissue distribution, expressed by the venom gland.

It localises to the secreted. In terms of biological role, may increase intracellular calcium release through the activation of nuclear inositol 1,4,5-trisphosphate receptors (ITPR) of cardiomyocytes, thereby causing an increase in the contraction frequency of these cells. The polypeptide is Putative calcium channel toxin Tx758 (Buthus israelis (Israeli scorpion)).